The primary structure comprises 268 residues: L-proline trans-4-hydroxylase (268 aa).

3 residues coordinate Fe cation: H113, D115, and H218.

The protein belongs to the PhyH family. As to quaternary structure, monomer. It depends on Fe(2+) as a cofactor.

The catalysed reaction is L-proline + 2-oxoglutarate + O2 = trans-4-hydroxy-L-proline + succinate + CO2. Its pathway is antibiotic biosynthesis. With respect to regulation, competitively inhibited by pyridine-2,4-dicarboxylate. Inhibited by diethyl pyrocarbonate (DEPC), 3,4-dihydroxybenzoate, pyridine-2,5-dicarboxylate, alpha,alpha'-dipyridyl, and some metal ions such as Co(2+) and Zn(2+). Functionally, involved in the biosynthesis of the peptidolactone antibiotic etamycin (viridogrisein). Catalyzes the hydroxylation of free L-proline at the C-4 position to yield trans-4-hydroxy-L-proline. The sequence is that of L-proline trans-4-hydroxylase from Streptomyces griseoviridis.